Reading from the N-terminus, the 336-residue chain is Flap endonuclease 1 (336 aa).

The tract at residues 1-98 (MGVDLGDILS…GTLAARAQMK (98 aa)) is N-domain. Mg(2+)-binding residues include Asp27, Asp80, Glu150, Glu152, Asp171, Asp173, and Asp234. Residues 114–255 (DSFRYAQATA…RALKLIREHG (142 aa)) form an I-domain region. Residues 328-336 (GQSTLERWL) form an interaction with PCNA region.

The protein belongs to the XPG/RAD2 endonuclease family. FEN1 subfamily. As to quaternary structure, interacts with PCNA. PCNA stimulates the nuclease activity without altering cleavage specificity. Mg(2+) is required as a cofactor.

Structure-specific nuclease with 5'-flap endonuclease and 5'-3' exonuclease activities involved in DNA replication and repair. During DNA replication, cleaves the 5'-overhanging flap structure that is generated by displacement synthesis when DNA polymerase encounters the 5'-end of a downstream Okazaki fragment. Binds the unpaired 3'-DNA end and kinks the DNA to facilitate 5' cleavage specificity. Cleaves one nucleotide into the double-stranded DNA from the junction in flap DNA, leaving a nick for ligation. Also involved in the base excision repair (BER) pathway. Acts as a genome stabilization factor that prevents flaps from equilibrating into structures that lead to duplications and deletions. Also possesses 5'-3' exonuclease activity on nicked or gapped double-stranded DNA. The polypeptide is Flap endonuclease 1 (Methanothrix thermoacetophila (strain DSM 6194 / JCM 14653 / NBRC 101360 / PT) (Methanosaeta thermophila)).